The sequence spans 100 residues: MARKSVIQREKKRQKLEQKYHLIRRSSKKEISKVPSLSDKWKIHGKLESLPRNSAPIRLHRRCFSTGRPRANYRDFGLSGHILREMVHACLLPGATRSSW.

This sequence belongs to the universal ribosomal protein uS14 family. As to quaternary structure, part of the 30S ribosomal subunit.

Its subcellular location is the plastid. It is found in the chloroplast. Binds 16S rRNA, required for the assembly of 30S particles. This Glycine max (Soybean) protein is Small ribosomal subunit protein uS14c.